The following is a 247-amino-acid chain: Zinc finger protein YPR015C (247 aa).

2 C2H2-type zinc fingers span residues 185–207 (KQCPICGKVCSRPSTLRTHYLIH) and 213–237 (FKCTWEHCNKSFNVKSNMLRHLRTH).

The chain is Zinc finger protein YPR015C from Saccharomyces cerevisiae (strain ATCC 204508 / S288c) (Baker's yeast).